The chain runs to 330 residues: Nitrilase 3 (330 aa).

A CN hydrolase domain is found at 4–273 (VKAAAVQISP…EGEVIVDLDF (270 aa)). Glu-44 (proton acceptor) is an active-site residue. Lys-128 functions as the Proton donor in the catalytic mechanism. The Nucleophile role is filled by Cys-162. Residues 310–330 (RAAHPVSGAEQGPEDLRTPAA) are disordered.

Belongs to the carbon-nitrogen hydrolase superfamily. Nitrilase family.

The catalysed reaction is a nitrile + 2 H2O = a carboxylate + NH4(+). Functionally, nitrilases catalyze the mild hydrolytic conversion of organonitriles directly to the corresponding carboxylic acids. The chain is Nitrilase 3 from Unknown prokaryotic organism.